The sequence spans 301 residues: Probable alpha-L-glutamate ligase (301 aa).

Residues Leu104–Glu287 form the ATP-grasp domain. ATP-binding positions include Lys141, Glu178–Tyr179, Asp187, and Arg211–Asn213. Residues Asp248, Glu260, and Asn262 each contribute to the Mg(2+) site. Residues Asp248, Glu260, and Asn262 each contribute to the Mn(2+) site.

The protein belongs to the RimK family. The cofactor is Mg(2+). Mn(2+) is required as a cofactor.

The chain is Probable alpha-L-glutamate ligase from Marinomonas sp. (strain MWYL1).